The primary structure comprises 379 residues: Flagellin A (379 aa).

Coiled-coil stretches lie at residues 103-128 (TNSASERQALDEESTALQDELNRIAE) and 302-341 (YVDSQRAELGAKQNRLSHSINNLANIQENVEASNSRIKDT).

This sequence belongs to the bacterial flagellin family. Heteromer of multiple flagellin subunits including FlaA, FlaB, FlaC, FlaD and possibly FlaE.

The protein resides in the secreted. It is found in the bacterial flagellum. Functionally, flagellin is the subunit protein which polymerizes to form the filaments of bacterial flagella. FlaA is essential for flagellar synthesis and full motility. Important for virulence at two different levels: is needed for crossing the fish integument and may play a role once the bacterium has entered the host. This Vibrio anguillarum (Listonella anguillarum) protein is Flagellin A (flaA).